The chain runs to 214 residues: Large ribosomal subunit protein uL16-like (214 aa).

The protein belongs to the universal ribosomal protein uL16 family. Component of the 60S large ribosomal subunit (LSU).

It localises to the cytoplasm. Functionally, testis-specific component of the ribosome, which is required for the transition from prophase to metaphase in male meiosis I. Compensates for the inactivated X-linked RPL10 paralog during spermatogenesis. The ribosome is a large ribonucleoprotein complex responsible for the synthesis of proteins in the cell. The small ribosomal subunit (SSU) binds messenger RNAs (mRNAs) and translates the encoded message by selecting cognate aminoacyl-transfer RNA (tRNA) molecules. The large subunit (LSU) contains the ribosomal catalytic site termed the peptidyl transferase center (PTC), which catalyzes the formation of peptide bonds, thereby polymerizing the amino acids delivered by tRNAs into a polypeptide chain. The nascent polypeptides leave the ribosome through a tunnel in the LSU and interact with protein factors that function in enzymatic processing, targeting, and the membrane insertion of nascent chains at the exit of the ribosomal tunnel. This chain is Large ribosomal subunit protein uL16-like (RPL10L), found in Bos taurus (Bovine).